A 282-amino-acid chain; its full sequence is Large ribosomal subunit protein uL2 (282 aa).

Positions 215 to 282 (RHKGIRPTVR…IIRSRKETKK (68 aa)) are disordered. The span at 263–282 (RNPKKPSTKLIIRSRKETKK) shows a compositional bias: basic residues.

This sequence belongs to the universal ribosomal protein uL2 family. As to quaternary structure, part of the 50S ribosomal subunit. Forms a bridge to the 30S subunit in the 70S ribosome.

In terms of biological role, one of the primary rRNA binding proteins. Required for association of the 30S and 50S subunits to form the 70S ribosome, for tRNA binding and peptide bond formation. It has been suggested to have peptidyltransferase activity; this is somewhat controversial. Makes several contacts with the 16S rRNA in the 70S ribosome. The protein is Large ribosomal subunit protein uL2 of Mesomycoplasma hyopneumoniae (strain 7448) (Mycoplasma hyopneumoniae).